The chain runs to 422 residues: L-threonine dehydratase biosynthetic IlvA (422 aa).

Lysine 56 is subject to N6-(pyridoxal phosphate)lysine. Pyridoxal 5'-phosphate-binding positions include asparagine 83, 189–193 (GGGGL), and serine 315. The region spanning 339–413 (HYFILNFPQR…FDPSNIYINE (75 aa)) is the ACT-like domain.

The protein belongs to the serine/threonine dehydratase family. Homotetramer. Pyridoxal 5'-phosphate is required as a cofactor.

It catalyses the reaction L-threonine = 2-oxobutanoate + NH4(+). Its pathway is amino-acid biosynthesis; L-isoleucine biosynthesis; 2-oxobutanoate from L-threonine: step 1/1. Catalyzes the anaerobic formation of alpha-ketobutyrate and ammonia from threonine in a two-step reaction. The first step involved a dehydration of threonine and a production of enamine intermediates (aminocrotonate), which tautomerizes to its imine form (iminobutyrate). Both intermediates are unstable and short-lived. The second step is the nonenzymatic hydrolysis of the enamine/imine intermediates to form 2-ketobutyrate and free ammonia. In the low water environment of the cell, the second step is accelerated by RidA. This chain is L-threonine dehydratase biosynthetic IlvA (ilvA), found in Staphylococcus aureus (strain MSSA476).